The following is a 211-amino-acid chain: Nucleoside triphosphate pyrophosphatase (211 aa).

The active-site Proton acceptor is Asp-78.

Belongs to the Maf family. A divalent metal cation serves as cofactor.

Its subcellular location is the cytoplasm. The catalysed reaction is a ribonucleoside 5'-triphosphate + H2O = a ribonucleoside 5'-phosphate + diphosphate + H(+). It catalyses the reaction a 2'-deoxyribonucleoside 5'-triphosphate + H2O = a 2'-deoxyribonucleoside 5'-phosphate + diphosphate + H(+). Nucleoside triphosphate pyrophosphatase. May have a dual role in cell division arrest and in preventing the incorporation of modified nucleotides into cellular nucleic acids. The sequence is that of Nucleoside triphosphate pyrophosphatase from Mycolicibacterium smegmatis (strain ATCC 700084 / mc(2)155) (Mycobacterium smegmatis).